Here is a 462-residue protein sequence, read N- to C-terminus: Semenogelin-1 (462 aa).

Positions 1-23 (MKPNIIFVLSLLLILEKQAAVMG) are cleaved as a signal peptide. The residue at position 24 (glutamine 24) is a Pyrrolidone carboxylic acid. The tract at residues 24-61 (QKGGSKGRLPSEFSQFPHGQKGQHYSGQKGKQQTESKG) is disordered. Residues 46–61 (QHYSGQKGKQQTESKG) show a composition bias toward polar residues. Tandem repeats lie at residues 70–129 (HVDA…VVIH), 141–200 (NPSQ…QTEE), and 201–260 (LVAN…QDEL). The interval 70–439 (HVDANDHDQS…SHGGLDIVII (370 aa)) is repeat-rich region. 2 disordered regions span residues 131–157 (KGGK…GISS) and 173–194 (KEQT…QSSY). Polar residues predominate over residues 138 to 157 (GTQNPSQDQGNSPSGKGISS). The interaction with EPPIN stretch occupies residues 164-283 (ERLWVHGLSK…NQDQQHGRKA (120 aa)). The 2 X 60 AA tandem repeats, type 1 stretch occupies residues 261 to 380 (LVYNKNQHQT…QRSIYSQTEK (120 aa)). A disordered region spans residues 270 to 432 (TKNLNQDQQH…KGRHQHGSHG (163 aa)). 3 stretches are compositionally biased toward polar residues: residues 308-317 (DVSQSSIYSQ), 324-335 (GKSQKQITIPSQ), and 343-352 (ANKISYQSSS). The 3-2 repeat unit spans residues 381-439 (LVAGKSQIQAPNPKQEPWHGENAKGESGQSTNREQDLLSHEQKGRHQHGSHGGLDIVII). Basic and acidic residues predominate over residues 413–424 (REQDLLSHEQKG).

It belongs to the semenogelin family. As to quaternary structure, occurs in disulfide-linked complexes which may also contain two less abundant 71- and 76-kDa semenogelin-related polypeptides. Interacts with EPPIN (via C-terminus); Cys-239 is a critical amino acid for both binding to EPPIN. Transglutaminase substrate. Post-translationally, rapidly cleaved after ejaculation by KLK3/PSA, resulting in liquefaction of the semen coagulum and the progressive release of motile spermatozoa. Seminal vesicle.

Its subcellular location is the secreted. Its function is as follows. Predominant protein in semen. It participates in the formation of a gel matrix entrapping the accessory gland secretions and ejaculated spermatozoa. Fragments of semenogelin and/or fragments of the related proteins may contribute to the activation of progressive sperm movements as the gel-forming proteins are fragmented by KLK3/PSA. Functionally, alpha-inhibin-92 and alpha-inhibin-31, derived from the proteolytic degradation of semenogelin, inhibit the secretion of pituitary follicle-stimulating hormone. The sequence is that of Semenogelin-1 (SEMG1) from Homo sapiens (Human).